The primary structure comprises 1149 residues: Eukaryotic translation initiation factor 3 subunit A (1149 aa).

The PCI domain maps to 317-498 (IQRMTSHVLI…HSVHFGTDLS (182 aa)). 2 disordered regions span residues 496-515 (DLSE…QSMP) and 811-1149 (EEER…KHHR). Over residues 811–885 (EEERRRIEEE…APRGEKEERG (75 aa)) the composition is skewed to basic and acidic residues. A compositionally biased stretch (gly residues) spans 886–895 (GGGGGGGAWR). A compositionally biased stretch (basic and acidic residues) spans 908–924 (AKPESDWRNAREAREPA). A compositionally biased stretch (low complexity) spans 925-937 (PESAGASSAAAPA). Composition is skewed to basic and acidic residues over residues 961-970 (RPPRGDDREP), 1005-1095 (GPMR…DRRG), and 1113-1132 (EPAK…KEAR).

It belongs to the eIF-3 subunit A family. Component of the eukaryotic translation initiation factor 3 (eIF-3) complex.

Its subcellular location is the cytoplasm. RNA-binding component of the eukaryotic translation initiation factor 3 (eIF-3) complex, which is involved in protein synthesis of a specialized repertoire of mRNAs and, together with other initiation factors, stimulates binding of mRNA and methionyl-tRNAi to the 40S ribosome. The eIF-3 complex specifically targets and initiates translation of a subset of mRNAs involved in cell proliferation. This Culex quinquefasciatus (Southern house mosquito) protein is Eukaryotic translation initiation factor 3 subunit A.